We begin with the raw amino-acid sequence, 173 residues long: Acireductone dioxygenase (173 aa).

A disordered region spans residues methionine 1 to glycine 21. 4 residues coordinate Fe(2+): histidine 84, histidine 86, glutamate 90, and histidine 129. Histidine 84, histidine 86, glutamate 90, and histidine 129 together coordinate Ni(2+).

It belongs to the acireductone dioxygenase (ARD) family. Requires Fe(2+) as cofactor. Ni(2+) is required as a cofactor.

It localises to the cytoplasm. It is found in the nucleus. It catalyses the reaction 1,2-dihydroxy-5-(methylsulfanyl)pent-1-en-3-one + O2 = 4-methylsulfanyl-2-oxobutanoate + formate + 2 H(+). It carries out the reaction 1,2-dihydroxy-5-(methylsulfanyl)pent-1-en-3-one + O2 = 3-(methylsulfanyl)propanoate + CO + formate + 2 H(+). It participates in amino-acid biosynthesis; L-methionine biosynthesis via salvage pathway; L-methionine from S-methyl-5-thio-alpha-D-ribose 1-phosphate: step 5/6. Catalyzes 2 different reactions between oxygen and the acireductone 1,2-dihydroxy-3-keto-5-methylthiopentene (DHK-MTPene) depending upon the metal bound in the active site. Fe-containing acireductone dioxygenase (Fe-ARD) produces formate and 2-keto-4-methylthiobutyrate (KMTB), the alpha-ketoacid precursor of methionine in the methionine recycle pathway. Ni-containing acireductone dioxygenase (Ni-ARD) produces methylthiopropionate, carbon monoxide and formate, and does not lie on the methionine recycle pathway. In Yarrowia lipolytica (strain CLIB 122 / E 150) (Yeast), this protein is Acireductone dioxygenase.